The following is a 543-amino-acid chain: Sensor histidine kinase DcuS (543 aa).

The Cytoplasmic segment spans residues 1–20 (MRHSLPYRMLRKRPMKLSTT). A helical membrane pass occupies residues 21-41 (VILMVSAVLFSVLLVVHLIYF). Residues 42–181 (SQISDMTRDG…VTQQINDSRW (140 aa)) lie on the Periplasmic side of the membrane. Residues 107–110 (RYSH), lysine 121, 140–142 (GFL), and arginine 147 contribute to the (R)-malate site. Residues 182-202 (SIIWSVLFGMLVGLIGTCILV) traverse the membrane as a helical segment. At 203–543 (KVLKKILFGL…IPWDGERSNR (341 aa)) the chain is on the cytoplasmic side. Residues 212–323 (LEPYEISTLF…IIGAISTFRD (112 aa)) form the PAS domain. Residues 346-538 (ERSHEFMNKL…QFFVQIPWDG (193 aa)) form the Histidine kinase domain. Histidine 349 is modified (phosphohistidine; by autocatalysis).

As to quaternary structure, homodimer. In terms of processing, autophosphorylated. The phosphoryl group is rapidly transferred to DcuR.

It localises to the cell inner membrane. The enzyme catalyses ATP + protein L-histidine = ADP + protein N-phospho-L-histidine.. Its function is as follows. Member of the two-component regulatory system DcuR/DcuS. Involved in the C4-dicarboxylate-stimulated regulation of the genes encoding the anaerobic fumarate respiratory system (frdABCD; nuoAN; dcuB; sdhCDAB; etc.). Weakly regulates the aerobic C4-dicarboxylate transporter dctA. Activates DcuR by phosphorylation. The protein is Sensor histidine kinase DcuS (dcuS) of Escherichia coli O157:H7.